The primary structure comprises 336 residues: Ankyrin repeat and SOCS box protein 1 (336 aa).

6 ANK repeats span residues C37 to E69, L78 to L107, K111 to G140, H144 to V173, L192 to F221, and S236 to L266. In terms of domain architecture, SOCS box spans L287 to E336.

The protein belongs to the ankyrin SOCS box (ASB) family. Interacts with CUL5 and RNF7. As to expression, highest expression in testis, spleen, bone marrow and salivary gland.

It participates in protein modification; protein ubiquitination. Its function is as follows. Probable substrate-recognition component of a SCF-like ECS (Elongin-Cullin-SOCS-box protein) E3 ligase complex which mediates the ubiquitination and subsequent proteasomal degradation of target proteins. Mediates Notch-induced ubiquitination and degradation of TCF3/E2A and JAK2. May play a role in testis development. The polypeptide is Ankyrin repeat and SOCS box protein 1 (Asb1) (Mus musculus (Mouse)).